A 599-amino-acid chain; its full sequence is Aspartate--tRNA(Asp/Asn) ligase (599 aa).

Glu169 serves as a coordination point for L-aspartate. An aspartate region spans residues Gln193–Lys196. Residue Arg215 participates in L-aspartate binding. ATP contacts are provided by residues Arg215–Glu217 and Gln224. His447 contacts L-aspartate. An ATP-binding site is contributed by Glu481. Residue Arg488 participates in L-aspartate binding. Position 533-536 (Gly533–Arg536) interacts with ATP.

The protein belongs to the class-II aminoacyl-tRNA synthetase family. Type 1 subfamily. Homodimer.

The protein localises to the cytoplasm. It carries out the reaction tRNA(Asx) + L-aspartate + ATP = L-aspartyl-tRNA(Asx) + AMP + diphosphate. Its function is as follows. Aspartyl-tRNA synthetase with relaxed tRNA specificity since it is able to aspartylate not only its cognate tRNA(Asp) but also tRNA(Asn). Reaction proceeds in two steps: L-aspartate is first activated by ATP to form Asp-AMP and then transferred to the acceptor end of tRNA(Asp/Asn). This is Aspartate--tRNA(Asp/Asn) ligase from Pseudarthrobacter chlorophenolicus (strain ATCC 700700 / DSM 12829 / CIP 107037 / JCM 12360 / KCTC 9906 / NCIMB 13794 / A6) (Arthrobacter chlorophenolicus).